We begin with the raw amino-acid sequence, 1280 residues long: Multidrug resistance protein 1 (1280 aa).

The Cytoplasmic portion of the chain corresponds to 1–72 (MSRAHAAYAN…YADATDRVLM (72 aa)). The ABC transmembrane type-1 1 domain occupies 72 to 357 (MIAGTAFAVA…VAPSRTAFTE (286 aa)). The next 6 membrane-spanning stretches (helical) occupy residues 73 to 93 (IAGTAFAVACGAGMPVFSFIF), 120 to 140 (YVGIAMLIACAGHVMCWTVAA), 189 to 209 (KLSQGIMNGSMGVIGYIAGFV), 216 to 236 (LMMIGMMPFIIVMAAIIGSIV), 297 to 317 (LSAAVIMALMYVSYTVAFFFG), and 326 to 345 (RDMADIISTFLAVLMGSFGL). The Cytoplasmic portion of the chain corresponds to 346 to 712 (GFVAPSRTAF…MRMNKDKAWA (367 aa)). Residues 391 to 634 (IEFRNVRFAY…DGEFAAVAKM (244 aa)) form the ABC transporter 1 domain. 426–433 (GASGCGKS) is a binding site for ATP. The next 6 membrane-spanning stretches (helical) occupy residues 713–733 (VALGILSSVVIGSARPASSIV), 762–781 (PLFIVFAVANFSGWILHGFY), 837–857 (IGLKVQTMCIIASGLVVGFIY), 858–878 (QWKLALVALACMPLMIGCSLT), 938–958 (IIAGGIYGITQFIFYGVYALC), and 976–996 (VMIASMSILFGAQNAGEAGAF). The region spanning 713-1002 (VALGILSSVV…AGAFATKLAD (290 aa)) is the ABC transmembrane type-1 2 domain. The ABC transporter 2 domain occupies 1036 to 1274 (IEYRNVQFIY…GGEYKTRYDL (239 aa)). 1071–1078 (GQTGCGKS) lines the ATP pocket. The N-linked (GlcNAc...) asparagine glycan is linked to Asn-1113.

It belongs to the ABC transporter superfamily. ABCB family. Multidrug resistance exporter (TC 3.A.1.201) subfamily.

It is found in the membrane. The catalysed reaction is ATP + H2O + xenobioticSide 1 = ADP + phosphate + xenobioticSide 2.. In terms of biological role, energy-dependent efflux pump responsible for decreased drug accumulation in multi-drug-resistant cells. Confers vinblastine resistance. This chain is Multidrug resistance protein 1 (MDR1), found in Leishmania enriettii.